The following is a 1173-amino-acid chain: Tectonin beta-propeller repeat-containing protein 1 (1173 aa).

TECPR repeat units follow at residues 210 to 239 (SVWAVSLQGRVWYRENVCHHNPEGSTWSLI), 254 to 285 (DLLWATLWEGQAIVREGIDRNNPQGISWSTVE), 301 to 332 (DVVWCITKDRKVWFRRGVNSHNPCGTSWIEMV), and 344 to 376 (NQVWGIGCDDRTIYFRQGVTPSELSGKMWKAIV). Polar residues predominate over residues 413–430 (GDADTSSDTELSSIPTNL). The disordered stretch occupies residues 413-495 (GDADTSSDTE…STNPTPSTEL (83 aa)). Low complexity predominate over residues 431-456 (SSTPPMGAAASSASSTGSQAAGAPAS). Residues 475 to 485 (SDEKAHLESRK) show a composition bias toward basic and acidic residues. Positions 486–495 (STNPTPSTEL) are enriched in polar residues. The PH domain maps to 618-727 (VWVKTGMLQW…WLSLLTMSCC (110 aa)). TECPR repeat units follow at residues 739–766 (HAIWSVSCKGDIFVSEPSPELEAEPHPM), 962–991 (ALWAISDKGDVLCRLGVTQQNPAGTSWLHV), 1007–1037 (QVWAVARDGSAFYRGSVSPKKPAGDCWYHIP), 1053–1083 (SVFVLDKNGNLWYRQGITPSYPQGSAWDHVS), and 1095–1135 (DQVW…DYGI). The tract at residues 1147–1173 (NASQAPRGTVPSESPPEPMESEGRVMC) is disordered.

It belongs to the TECPR1 family.

Its subcellular location is the cytoplasmic vesicle. The protein resides in the autophagosome membrane. The protein localises to the lysosome membrane. Its function is as follows. Tethering factor involved in autophagy. Involved in autophagosome maturation by promoting the autophagosome fusion with lysosomes. Binds phosphatidylinositol-3-phosphate (PtdIns(3)P) present at the surface of autophagosomes. This chain is Tectonin beta-propeller repeat-containing protein 1 (TECPR1), found in Gallus gallus (Chicken).